The following is a 299-amino-acid chain: Tetrahydromethanopterin S-methyltransferase subunit E (299 aa).

6 consecutive transmembrane segments (helical) span residues 57–77 (AISGEPVSYGLYVAVAGTIAW), 80–100 (INAGLNAVLAIIVGSGVAAIV), 133–153 (IGPIVGHGFIAVFTMTLAAYL), 158–178 (LGNPFPLPLVALIFGITVGAI), 226–246 (YFCSRFGGPLTGLCFGLIIFL), and 262–282 (VTKTSIALLVGLLVVAVAAVI).

The protein belongs to the MtrE family. As to quaternary structure, the complex is composed of 8 subunits; MtrA, MtrB, MtrC, MtrD, MtrE, MtrF, MtrG and MtrH.

It is found in the cell membrane. The catalysed reaction is 5-methyl-5,6,7,8-tetrahydromethanopterin + coenzyme M + 2 Na(+)(in) = 5,6,7,8-tetrahydromethanopterin + methyl-coenzyme M + 2 Na(+)(out). It participates in one-carbon metabolism; methanogenesis from CO(2); methyl-coenzyme M from 5,10-methylene-5,6,7,8-tetrahydromethanopterin: step 2/2. In terms of biological role, part of a complex that catalyzes the formation of methyl-coenzyme M and tetrahydromethanopterin from coenzyme M and methyl-tetrahydromethanopterin. This is an energy-conserving, sodium-ion translocating step. This Methanococcus maripaludis (strain C7 / ATCC BAA-1331) protein is Tetrahydromethanopterin S-methyltransferase subunit E.